The sequence spans 375 residues: ELAV-like protein 2 (375 aa).

RRM domains follow at residues 67–145 (TNLI…YARP), 153–233 (ANLY…FANN), and 292–370 (WCIF…FKTS).

The protein belongs to the RRM elav family. Part of a ribonucleoprotein (RNP) complex, at least composed of elavl1/elrA and/or elavl2/elrB, igf2bp3/vg1RBP, ddx6/Xp54, ybx2/frgy2, lsm14b/rap55b and, in a subset of RNP complexes, stau1/staufen. Binds RNA as a homooligomer.

Its subcellular location is the cytoplasm. The protein resides in the cell cortex. Its function is as follows. Binds to poly-U elements and AU-rich elements (AREs) in the 3'-UTR of target mRNAs. Required for the vegetal localization of vg1 mRNA. Probably required for nervous system development. The sequence is that of ELAV-like protein 2 from Xenopus tropicalis (Western clawed frog).